Consider the following 132-residue polypeptide: Large ribosomal subunit protein uL14 (132 aa).

Belongs to the universal ribosomal protein uL14 family. As to quaternary structure, part of the 50S ribosomal subunit. Forms a cluster with proteins L3 and L24e, part of which may contact the 16S rRNA in 2 intersubunit bridges.

In terms of biological role, binds to 23S rRNA. Forms part of two intersubunit bridges in the 70S ribosome. The protein is Large ribosomal subunit protein uL14 of Methanococcus aeolicus (strain ATCC BAA-1280 / DSM 17508 / OCM 812 / Nankai-3).